Reading from the N-terminus, the 100-residue chain is Urease subunit gamma (100 aa).

This sequence belongs to the urease gamma subunit family. Heterotrimer of UreA (gamma), UreB (beta) and UreC (alpha) subunits. Three heterotrimers associate to form the active enzyme.

The protein localises to the cytoplasm. It catalyses the reaction urea + 2 H2O + H(+) = hydrogencarbonate + 2 NH4(+). It participates in nitrogen metabolism; urea degradation; CO(2) and NH(3) from urea (urease route): step 1/1. The sequence is that of Urease subunit gamma from Micrococcus luteus (strain ATCC 4698 / DSM 20030 / JCM 1464 / CCM 169 / CCUG 5858 / IAM 1056 / NBRC 3333 / NCIMB 9278 / NCTC 2665 / VKM Ac-2230) (Micrococcus lysodeikticus).